Reading from the N-terminus, the 421-residue chain is ATP-dependent RNA helicase RhlB (421 aa).

A Q motif motif is present at residues 9-37 (QKFSDFALHPQVVEALEKKRFYNCTPIQA). The Helicase ATP-binding domain occupies 40–219 (LPLTLAGRDV…FEQMNNAEYV (180 aa)). An ATP-binding site is contributed by 53–60 (AQTGTGKT). The DEAD box signature appears at 165–168 (DEAD). In terms of domain architecture, Helicase C-terminal spans 245 to 390 (RLLQTLIEEE…VSKYNPEALM (146 aa)). Positions 396 to 421 (PLRLTRSRPGNGPRRAGAPRNRRRSG) are disordered. Residues 402–414 (SRPGNGPRRAGAP) show a composition bias toward low complexity.

Belongs to the DEAD box helicase family. RhlB subfamily. As to quaternary structure, component of the RNA degradosome, which is a multiprotein complex involved in RNA processing and mRNA degradation.

Its subcellular location is the cytoplasm. The catalysed reaction is ATP + H2O = ADP + phosphate + H(+). Functionally, DEAD-box RNA helicase involved in RNA degradation. Has RNA-dependent ATPase activity and unwinds double-stranded RNA. The polypeptide is ATP-dependent RNA helicase RhlB (Salmonella dublin (strain CT_02021853)).